Consider the following 778-residue polypeptide: Hyperosmolality-gated Ca2+ permeable channel 1.4 (778 aa).

Helical transmembrane passes span 7 to 27, 101 to 121, 158 to 178, 375 to 395, 427 to 447, 467 to 487, 512 to 532, 584 to 604, 626 to 646, and 651 to 671; these read IGLAAAINILSALIFLLLFAI, IYLIGLKIFGPIALLSWSILV, FWAHLVMAYAFTFWTCYVLMK, FVMHIAFFFLTFFFIIPIAFV, FLPGIVLKLFLIFLPTILMIM, YYIFNLVNVFLGSVITGSAFE, ATFFITYIMVDGWAGVAGEIF, PVTPVLLPFIIFFFGFAYLVF, VHGRIISALIISQILLLGLMS, and VQSTPFLLVLAILTFGFHRFC. The tract at residues 738 to 778 is disordered; it reads VVQTKRQRSRRTTVASSNASRGSSQSTPFNQLDLGKGKPET. A compositionally biased stretch (low complexity) spans 753–763; the sequence is SSNASRGSSQS.

It belongs to the CSC1 (TC 1.A.17) family.

The protein localises to the membrane. In terms of biological role, acts as an osmosensitive calcium-permeable cation channel. This chain is Hyperosmolality-gated Ca2+ permeable channel 1.4, found in Arabidopsis thaliana (Mouse-ear cress).